The primary structure comprises 165 residues: Phosphopantetheine adenylyltransferase (165 aa).

Thr-10 lines the substrate pocket. Residues 10-11 and His-18 each bind ATP; that span reads TF. Substrate-binding residues include Lys-42, Leu-75, and Arg-89. ATP is bound by residues 90–92, Glu-100, and 125–131; these read GLR and YTYVASS.

It belongs to the bacterial CoaD family. In terms of assembly, homohexamer. The cofactor is Mg(2+).

The protein resides in the cytoplasm. It carries out the reaction (R)-4'-phosphopantetheine + ATP + H(+) = 3'-dephospho-CoA + diphosphate. Its pathway is cofactor biosynthesis; coenzyme A biosynthesis; CoA from (R)-pantothenate: step 4/5. Reversibly transfers an adenylyl group from ATP to 4'-phosphopantetheine, yielding dephospho-CoA (dPCoA) and pyrophosphate. In Chlorobium phaeobacteroides (strain BS1), this protein is Phosphopantetheine adenylyltransferase.